Consider the following 852-residue polypeptide: Mannosyl-oligosaccharide glucosidase GCS1 (852 aa).

The tract at residues 1-31 is disordered; the sequence is MTGASRRSARGRIKSSSLSPGSDEGSAYPPS. Over 1–51 the chain is Cytoplasmic; the sequence is MTGASRRSARGRIKSSSLSPGSDEGSAYPPSIRRGKGKELVSIGAFKTNLK. Residues 6–12 carry the Endoplasmic reticulum targeting motif; the sequence is RRSARGR. Residues 15 to 26 show a composition bias toward low complexity; that stretch reads SSSLSPGSDEGS. The chain crosses the membrane as a helical; Signal-anchor for type II membrane protein span at residues 52-72; the sequence is ILVGLIILGIIVIYFVINRLV. The Lumenal segment spans residues 73–852; sequence RHGLLFDESQ…LIMSEDYPIF (780 aa). Positions 91 to 150 are required for endoplasmic reticulum targeting; the sequence is PAPKVMDLSMFQGEHKESLYWGTYRPHVYFGVRARTPLSLVAGLMWLGVKDEMYVMRHFC. N-linked (GlcNAc...) asparagine glycosylation is found at N282, N552, and N570. Residues 574 to 583 show a composition bias toward polar residues; sequence QELNPKTLSS. Residues 574–593 are disordered; the sequence is QELNPKTLSSGLDDYPRASH. The Proton donor role is filled by D586. N-linked (GlcNAc...) asparagine glycosylation is found at N633, N662, and N730. Catalysis depends on E819, which acts as the Proton acceptor.

It belongs to the glycosyl hydrolase 63 family. As to expression, constitutively expressed in roots, stems, leaves, flowers and siliques.

Its subcellular location is the endoplasmic reticulum membrane. The enzyme catalyses N(4)-(alpha-D-Glc-(1-&gt;2)-alpha-D-Glc-(1-&gt;3)-alpha-D-Glc-(1-&gt;3)-alpha-D-Man-(1-&gt;2)-alpha-D-Man-(1-&gt;2)-alpha-D-Man-(1-&gt;3)-[alpha-D-Man-(1-&gt;2)-alpha-D-Man-(1-&gt;3)-[alpha-D-Man-(1-&gt;2)-alpha-D-Man-(1-&gt;6)]-alpha-D-Man-(1-&gt;6)]-beta-D-Man-(1-&gt;4)-beta-D-GlcNAc-(1-&gt;4)-beta-D-GlcNAc)-L-asparaginyl-[protein] + H2O = N(4)-(alpha-D-Glc-(1-&gt;3)-alpha-D-Glc-(1-&gt;3)-alpha-D-Man-(1-&gt;2)-alpha-D-Man-(1-&gt;2)-alpha-D-Man-(1-&gt;3)-[alpha-D-Man-(1-&gt;2)-alpha-D-Man-(1-&gt;3)-[alpha-D-Man-(1-&gt;2)-alpha-D-Man-(1-&gt;6)]-alpha-D-Man-(1-&gt;6)]-beta-D-Man-(1-&gt;4)-beta-D-GlcNAc-(1-&gt;4)-beta-D-GlcNAc)-L-asparaginyl-[protein] + beta-D-glucose. It functions in the pathway glycan metabolism; N-glycan degradation. Functionally, cleaves the distal alpha 1,2-linked glucose residue from the Glc(3)Man(9)GlcNAc(2) oligosaccharide precursor. Required for the accumulation of seed storage proteins, the formation of protein bodies, cell differentiation, cellulose biosynthesis and organization (in cell walls), cell shape determination and organization (e.g. epidermal cells), and embryo development. Involved in root development. The polypeptide is Mannosyl-oligosaccharide glucosidase GCS1 (GCS1) (Arabidopsis thaliana (Mouse-ear cress)).